A 209-amino-acid polypeptide reads, in one-letter code: Methylthioribulose-1-phosphate dehydratase (209 aa).

Zn(2+) contacts are provided by histidine 98 and histidine 100.

This sequence belongs to the aldolase class II family. MtnB subfamily. In terms of assembly, homotetramer. Requires Zn(2+) as cofactor.

The catalysed reaction is 5-(methylsulfanyl)-D-ribulose 1-phosphate = 5-methylsulfanyl-2,3-dioxopentyl phosphate + H2O. The protein operates within amino-acid biosynthesis; L-methionine biosynthesis via salvage pathway; L-methionine from S-methyl-5-thio-alpha-D-ribose 1-phosphate: step 2/6. Catalyzes the dehydration of methylthioribulose-1-phosphate (MTRu-1-P) into 2,3-diketo-5-methylthiopentyl-1-phosphate (DK-MTP-1-P). The chain is Methylthioribulose-1-phosphate dehydratase (mtnB) from Bacillus subtilis (strain 168).